Consider the following 221-residue polypeptide: Ribonuclease T (221 aa).

An Exonuclease domain is found at V21 to F195. D24, E26, H182, and D187 together coordinate Mg(2+). H182 (proton donor/acceptor) is an active-site residue.

Belongs to the RNase T family. In terms of assembly, homodimer. The cofactor is Mg(2+).

Its function is as follows. Trims short 3' overhangs of a variety of RNA species, leaving a one or two nucleotide 3' overhang. Responsible for the end-turnover of tRNA: specifically removes the terminal AMP residue from uncharged tRNA (tRNA-C-C-A). Also appears to be involved in tRNA biosynthesis. The sequence is that of Ribonuclease T from Buchnera aphidicola subsp. Cinara cedri (strain Cc).